A 197-amino-acid polypeptide reads, in one-letter code: 7-methyl-GTP pyrophosphatase (197 aa).

The active-site Proton acceptor is Asp-69.

Belongs to the Maf family. YceF subfamily. A divalent metal cation is required as a cofactor.

The protein resides in the cytoplasm. It carries out the reaction N(7)-methyl-GTP + H2O = N(7)-methyl-GMP + diphosphate + H(+). Nucleoside triphosphate pyrophosphatase that hydrolyzes 7-methyl-GTP (m(7)GTP). May have a dual role in cell division arrest and in preventing the incorporation of modified nucleotides into cellular nucleic acids. This is 7-methyl-GTP pyrophosphatase from Syntrophotalea carbinolica (strain DSM 2380 / NBRC 103641 / GraBd1) (Pelobacter carbinolicus).